Reading from the N-terminus, the 101-residue chain is A-type ATP synthase subunit F (101 aa).

It belongs to the V-ATPase F subunit family. In terms of assembly, has multiple subunits with at least A(3), B(3), C, D, E, F, H, I and proteolipid K(x).

The protein localises to the cell membrane. In terms of biological role, component of the A-type ATP synthase that produces ATP from ADP in the presence of a proton gradient across the membrane. The protein is A-type ATP synthase subunit F of Methanosarcina acetivorans (strain ATCC 35395 / DSM 2834 / JCM 12185 / C2A).